We begin with the raw amino-acid sequence, 636 residues long: 1-deoxy-D-xylulose-5-phosphate synthase (636 aa).

Residues H73 and 114–116 (SHA) contribute to the thiamine diphosphate site. A Mg(2+)-binding site is contributed by D146. Residues 147–148 (GA), N176, Y287, and E368 contribute to the thiamine diphosphate site. Residue N176 participates in Mg(2+) binding.

Belongs to the transketolase family. DXPS subfamily. As to quaternary structure, homodimer. Requires Mg(2+) as cofactor. The cofactor is thiamine diphosphate.

The catalysed reaction is D-glyceraldehyde 3-phosphate + pyruvate + H(+) = 1-deoxy-D-xylulose 5-phosphate + CO2. The protein operates within metabolic intermediate biosynthesis; 1-deoxy-D-xylulose 5-phosphate biosynthesis; 1-deoxy-D-xylulose 5-phosphate from D-glyceraldehyde 3-phosphate and pyruvate: step 1/1. Its function is as follows. Catalyzes the acyloin condensation reaction between C atoms 2 and 3 of pyruvate and glyceraldehyde 3-phosphate to yield 1-deoxy-D-xylulose-5-phosphate (DXP). In Corynebacterium glutamicum (strain ATCC 13032 / DSM 20300 / JCM 1318 / BCRC 11384 / CCUG 27702 / LMG 3730 / NBRC 12168 / NCIMB 10025 / NRRL B-2784 / 534), this protein is 1-deoxy-D-xylulose-5-phosphate synthase.